We begin with the raw amino-acid sequence, 388 residues long: Envelope protein F13 homolog (388 aa).

Residue Gly-2 is the site of N-myristoyl glycine; by host attachment. Positions 310-337 (GDAINNTKLLVVDDEYVHVSNADIDGTH) constitute a PLD phosphodiesterase domain.

The protein resides in the virion membrane. Its subcellular location is the host endoplasmic reticulum membrane. In terms of biological role, envelope protein associated with the inner side of the enveloped virion (EV) membrane. The chain is Envelope protein F13 homolog (P43K) from Molluscum contagiosum virus subtype 2 (MOCV).